The primary structure comprises 172 residues: S-ribosylhomocysteine lyase (172 aa).

His54, His58, and Cys128 together coordinate Fe cation.

The protein belongs to the LuxS family. Homodimer. The cofactor is Fe cation.

The catalysed reaction is S-(5-deoxy-D-ribos-5-yl)-L-homocysteine = (S)-4,5-dihydroxypentane-2,3-dione + L-homocysteine. Involved in the synthesis of autoinducer 2 (AI-2) which is secreted by bacteria and is used to communicate both the cell density and the metabolic potential of the environment. The regulation of gene expression in response to changes in cell density is called quorum sensing. Catalyzes the transformation of S-ribosylhomocysteine (RHC) to homocysteine (HC) and 4,5-dihydroxy-2,3-pentadione (DPD). The sequence is that of S-ribosylhomocysteine lyase from Aliivibrio fischeri (strain MJ11) (Vibrio fischeri).